The sequence spans 535 residues: Inositol 1,4,5-trisphosphate receptor-interacting protein-like 2 (535 aa).

The first 32 residues, 1–32 (MSVRYTLNLRVFWPLVTGLCTALVCLYHALRS), serve as a signal peptide directing secretion. Residues 33-43 (SEDARAESPDG) lie on the Extracellular side of the membrane. Residues 44–64 (ADSGFPLLKVAILLLLGYILL) form a helical membrane-spanning segment. Residues 65–535 (RCRHAIRQRL…RIQGSPEDEP (471 aa)) lie on the Cytoplasmic side of the membrane. S139 carries the post-translational modification Phosphoserine.

This sequence belongs to the ITPRIP family.

It localises to the membrane. This chain is Inositol 1,4,5-trisphosphate receptor-interacting protein-like 2 (Itpripl2), found in Mus musculus (Mouse).